The sequence spans 498 residues: Transcription factor bHLH78 (498 aa).

2 disordered regions span residues 1–24 (MDNE…FEHQ) and 207–297 (LVSP…PPKD). Residues 233–246 (NPISTASPSPSFSK) are compositionally biased toward polar residues. Basic and acidic residues predominate over residues 259 to 270 (SSEEKGGKRRRE). The span at 271 to 281 (EEDDEEEEGEG) shows a compositional bias: acidic residues. Positions 307-357 (QATDSHSLAERVRREKIGERMKLLQDLVPGCNKVTGKALMLDEIINYVQSL) constitute a bHLH domain.

Homodimer. Binds reversibly to CRY2 after blue light illumination. As to expression, expressed constitutively in roots, leaves, stems, and flowers.

It localises to the nucleus. Its function is as follows. Transcription factor that binds DNA to G box 5'-CACGTG-3' and to E-box 5'-CANNTG-3'. Binds to chromatin DNA of the FT gene and promotes its expression, and thus triggers flowering in response to blue light. The sequence is that of Transcription factor bHLH78 (BHLH78) from Arabidopsis thaliana (Mouse-ear cress).